Consider the following 344-residue polypeptide: Lipase chaperone (344 aa).

Residues Ala14 to Ala34 form a helical membrane-spanning segment. The tract at residues Ala39–Ser78 is disordered.

It belongs to the lipase chaperone family.

The protein localises to the cell inner membrane. Functionally, may be involved in the folding of the extracellular lipase during its passage through the periplasm. This chain is Lipase chaperone (lifO), found in Pseudomonas sp. (strain KWI-56).